The primary structure comprises 294 residues: Protein CHLOROPLAST J-LIKE DOMAIN 1, chloroplastic (294 aa).

The transit peptide at 1–58 (MAPALSTSCSSVMAFSTSNALRYHHPQISLRNSLRAPKSPSFVRLPLGKVLQSRIVIR) directs the protein to the chloroplast. Residues 59–164 (AASSAAGNPQ…GPRFSRSSKN (106 aa)) are Stromal-facing. The tract at residues 74 to 152 (NPYEVLGVNP…IKYADKQPII (79 aa)) is J-like domain. The helical transmembrane segment at 165-182 (DMLINLAISVVFSAWIAI) threads the bilayer. Residues 183 to 233 (KRNVEYKPLQFMSFVFVYRIFEKLKSFEAPSSPIYNEEGEESGRGLRMGKR) lie on the Chloroplast intermembrane side of the membrane. A helical transmembrane segment spans residues 234–256 (LLRSLSLVFGSILLASLAYTGFL). Topologically, residues 257-275 (NGIEYMGYSIPMVLYNNQE) are stromal. Residues 276-293 (LIVTASSAFMLYVIASFY) form a helical membrane-spanning segment. A topological domain (chloroplast intermembrane) is located at residue arginine 294.

As to quaternary structure, interacts (via J-like domain) with ARC6 (via J domain).

Its subcellular location is the plastid. It is found in the chloroplast inner membrane. Probably involved in the regulation of the fatty acid metabolic process in chloroplasts, especially chloroplastic galactolipids monogalactosyldiacylglycerol (MGDG) and digalactosyldiacylglycerol (DGDG). The chain is Protein CHLOROPLAST J-LIKE DOMAIN 1, chloroplastic from Arabidopsis thaliana (Mouse-ear cress).